The sequence spans 668 residues: Echinocandin B biosynthetic cluster protein J (668 aa).

Disordered stretches follow at residues 1–20 (MHFA…DQSL), 92–113 (YTPP…PPTP), 224–322 (PLDH…QSAD), 330–349 (EVAE…SIPT), and 483–506 (NCSS…PPLK). Positions 96 to 106 (SLDSRSSATPP) are enriched in polar residues. A compositionally biased stretch (pro residues) spans 264–275 (NPEPGTPTPPSP). Residues 311-322 (YRSTPSPCQSAD) show a composition bias toward polar residues. Positions 484 to 494 (CSSSSCSSSAS) are enriched in low complexity. The span at 495–505 (KKNEEKREPPL) shows a compositional bias: basic and acidic residues.

It participates in antifungal biosynthesis. Its function is as follows. Part of the gene cluster that mediates the biosynthesis of echinocandin B, a fungal lipidated cyclic hexapeptide that acts as an antifungal agent. Linoleoyl-AMP, produced by the fatty-acyl-AMP ligase ecdI, is transferred to the initiation carrier domain (T0) of ecdA. The linoleoyl-S-phosphopantetheinyl-T0 is sequentially extended with L-ornithine, L-threonine, L-proline, L-homotyrosine, L-threonine, and 4R-methyl-L-proline to form the linear hexapeptide. Thereafter, the terminal condensation (C7) performs macrocyclization of the NRPS product and the cyclic scaffold is released from ecdA. All six of the amino acid residues are hydroxylated, including 4R,5R-dihydroxy-L-ornithine, 4R-hydroxyl-L-proline, 3S,4S-dihydroxy-L-homotyrosine, and 3S-hydroxyl-4S-methyl-L-prolin. In the pathway, all the hydroxylation reactions are proposed to occur following completion of the cyclic peptide, so the unhydroxylated precursor produced by ecdA will undergo six rounds of hydroxylation. Five hydroxylase genes (ecdG, ecdH, ecdK, htyE and htyF) are embedded within the echinocandin B (ecd) and L-homotyrosine (hty) clusters. In Aspergillus rugulosus (Emericella rugulosa), this protein is Echinocandin B biosynthetic cluster protein J.